We begin with the raw amino-acid sequence, 1298 residues long: Phosphoribosylformylglycinamidine synthase (1298 aa).

The segment at 301 to 328 (APFPGASTGSGGEIRDEGATGRGAKPKA) is disordered. Residues 305-316 (GASTGSGGEIRD), 384-386 (TGY), and alanine 676 contribute to the ATP site. 4 residues coordinate Mg(2+): aspartate 677, glutamate 716, asparagine 720, and aspartate 884. Serine 886 serves as a coordination point for ATP. The Glutamine amidotransferase type-1 domain maps to 1045 to 1298 (VAVLREQGVN…MFRNARVWVN (254 aa)). Cysteine 1138 functions as the Nucleophile in the catalytic mechanism. Catalysis depends on residues histidine 1263 and glutamate 1265.

In the N-terminal section; belongs to the FGAMS family. Monomer.

It is found in the cytoplasm. The catalysed reaction is N(2)-formyl-N(1)-(5-phospho-beta-D-ribosyl)glycinamide + L-glutamine + ATP + H2O = 2-formamido-N(1)-(5-O-phospho-beta-D-ribosyl)acetamidine + L-glutamate + ADP + phosphate + H(+). It functions in the pathway purine metabolism; IMP biosynthesis via de novo pathway; 5-amino-1-(5-phospho-D-ribosyl)imidazole from N(2)-formyl-N(1)-(5-phospho-D-ribosyl)glycinamide: step 1/2. Its function is as follows. Phosphoribosylformylglycinamidine synthase involved in the purines biosynthetic pathway. Catalyzes the ATP-dependent conversion of formylglycinamide ribonucleotide (FGAR) and glutamine to yield formylglycinamidine ribonucleotide (FGAM) and glutamate. The protein is Phosphoribosylformylglycinamidine synthase of Pseudomonas fluorescens (strain Pf0-1).